The chain runs to 311 residues: Malate dehydrogenase (311 aa).

NAD(+) contacts are provided by residues 7-13 (GAAGGIG) and D34. Substrate-binding residues include R81 and R87. Residues N94 and 117-119 (ITN) each bind NAD(+). Substrate-binding residues include N119 and R153. H177 functions as the Proton acceptor in the catalytic mechanism. M227 lines the NAD(+) pocket.

The protein belongs to the LDH/MDH superfamily. MDH type 1 family. Homodimer.

It carries out the reaction (S)-malate + NAD(+) = oxaloacetate + NADH + H(+). Catalyzes the reversible oxidation of malate to oxaloacetate. The protein is Malate dehydrogenase of Colwellia psychrerythraea (strain 34H / ATCC BAA-681) (Vibrio psychroerythus).